Consider the following 196-residue polypeptide: Nucleoside triphosphate pyrophosphatase (196 aa).

Aspartate 73 functions as the Proton acceptor in the catalytic mechanism.

The protein belongs to the Maf family. It depends on a divalent metal cation as a cofactor.

The protein localises to the cytoplasm. The catalysed reaction is a ribonucleoside 5'-triphosphate + H2O = a ribonucleoside 5'-phosphate + diphosphate + H(+). The enzyme catalyses a 2'-deoxyribonucleoside 5'-triphosphate + H2O = a 2'-deoxyribonucleoside 5'-phosphate + diphosphate + H(+). Nucleoside triphosphate pyrophosphatase. May have a dual role in cell division arrest and in preventing the incorporation of modified nucleotides into cellular nucleic acids. This Chlamydia pneumoniae (Chlamydophila pneumoniae) protein is Nucleoside triphosphate pyrophosphatase.